We begin with the raw amino-acid sequence, 210 residues long: Probable nicotinate-nucleotide adenylyltransferase (210 aa).

This sequence belongs to the NadD family.

It catalyses the reaction nicotinate beta-D-ribonucleotide + ATP + H(+) = deamido-NAD(+) + diphosphate. It participates in cofactor biosynthesis; NAD(+) biosynthesis; deamido-NAD(+) from nicotinate D-ribonucleotide: step 1/1. Its function is as follows. Catalyzes the reversible adenylation of nicotinate mononucleotide (NaMN) to nicotinic acid adenine dinucleotide (NaAD). This is Probable nicotinate-nucleotide adenylyltransferase from Streptococcus mutans serotype c (strain ATCC 700610 / UA159).